The primary structure comprises 35 residues: Potassium channel toxin alpha-KTx 6.15 (35 aa).

4 cysteine pairs are disulfide-bonded: cysteine 3-cysteine 24, cysteine 9-cysteine 29, cysteine 13-cysteine 31, and cysteine 19-cysteine 34.

This sequence belongs to the short scorpion toxin superfamily. Potassium channel inhibitor family. Alpha-KTx 06 subfamily. In terms of tissue distribution, expressed by the venom gland.

The protein localises to the secreted. Functionally, blocks voltage-gated potassium channels rKv1.1/KCNA1 (IC(50)=13 nM), rKv1.2/KCNA2 (IC(50)=16 nM) and rKv1.3/KCNA3 (IC(50)=2 nM). This chain is Potassium channel toxin alpha-KTx 6.15, found in Hemiscorpius lepturus (Scorpion).